The chain runs to 323 residues: MEVFDYENVQLIPNKCLISSRSEADTSVEFGGHRFKLPVVPANMASVIDDKLAIWLAENGYFYIMHRFEPGKRFNFVTDMKQRGLISSISVGVKEEEYRLIDELVDAGLTPDYITIDIAHGYANTVIDMIHYIKKHLPKAFVVAGNIATPDAVRELEDAGADATKVGIGPGRACITKLKTGFGTAGWQLAAVRLCAKAARKPIIADGGIRHNGDIAKSVRFGASMVMIGSLFAGHKQSPGSDLVIDHRHYKQYYGSASAKQKGVYKNVEGKDLLVPYRGDIANTLNEMAQDLQSSISYAGGNNLQALRTVNYVIVQNTIMNGD.

The active-site Thioimidate intermediate is the C174. 203-226 (IIADGGIRHNGDIAKSVRFGASMV) is an NADP(+) binding site.

It belongs to the IMPDH/GMPR family. GuaC type 2 subfamily.

The enzyme catalyses IMP + NH4(+) + NADP(+) = GMP + NADPH + 2 H(+). Its function is as follows. Catalyzes the irreversible NADPH-dependent deamination of GMP to IMP. It functions in the conversion of nucleobase, nucleoside and nucleotide derivatives of G to A nucleotides, and in maintaining the intracellular balance of A and G nucleotides. The chain is GMP reductase from Oenococcus oeni (strain ATCC BAA-331 / PSU-1).